Consider the following 398-residue polypeptide: 1-deoxy-D-xylulose 5-phosphate reductoisomerase (398 aa).

NADPH contacts are provided by T11, G12, S13, I14, and N125. K126 is a 1-deoxy-D-xylulose 5-phosphate binding site. E127 lines the NADPH pocket. Position 151 (D151) interacts with Mn(2+). S152, E153, S186, and H209 together coordinate 1-deoxy-D-xylulose 5-phosphate. A Mn(2+)-binding site is contributed by E153. G215 contributes to the NADPH binding site. 4 residues coordinate 1-deoxy-D-xylulose 5-phosphate: S222, N227, K228, and E231. Residue E231 participates in Mn(2+) binding.

It belongs to the DXR family. It depends on Mg(2+) as a cofactor. The cofactor is Mn(2+).

The catalysed reaction is 2-C-methyl-D-erythritol 4-phosphate + NADP(+) = 1-deoxy-D-xylulose 5-phosphate + NADPH + H(+). It participates in isoprenoid biosynthesis; isopentenyl diphosphate biosynthesis via DXP pathway; isopentenyl diphosphate from 1-deoxy-D-xylulose 5-phosphate: step 1/6. Its function is as follows. Catalyzes the NADPH-dependent rearrangement and reduction of 1-deoxy-D-xylulose-5-phosphate (DXP) to 2-C-methyl-D-erythritol 4-phosphate (MEP). This Acinetobacter baumannii (strain AB307-0294) protein is 1-deoxy-D-xylulose 5-phosphate reductoisomerase.